The primary structure comprises 316 residues: MASADELTFHEFEEATNLLADTPDAATTSRSDQLTPQGHVAVAVGSGGSYGAEDEVEEESDKAALLQEQQQQQQPGFWTFSYYQSFFDVDTSQVLDRIKGSLLPRPGHNFVRHHLRNRPDLYGPFWICATLAFVLAVTGNLTLVLAQRRDPSIHYSPQFHKVTVAGISIYCYAWLVPLALWGFLRWRKGVQERMGPYTFLETVCIYGYSLFVFIPMVVLWLIPVPWLQWLFGALALGLSAAGLVFTLWPVVREDTRLVATVLLSVVVLLHALLAMGCKLYFFQSLPPENVAPPPQITSLPSNIALSPTLPQSLAPS.

Alanine 2 bears the N-acetylalanine mark. Residues 2 to 124 (ASADELTFHE…LRNRPDLYGP (123 aa)) lie on the Cytoplasmic side of the membrane. The interval 16–37 (TNLLADTPDAATTSRSDQLTPQ) is disordered. The segment covering 25-36 (AATTSRSDQLTP) has biased composition (polar residues). A helical transmembrane segment spans residues 125–145 (FWICATLAFVLAVTGNLTLVL). Residues 146–163 (AQRRDPSIHYSPQFHKVT) are Lumenal-facing. Residues 164–184 (VAGISIYCYAWLVPLALWGFL) traverse the membrane as a helical segment. Over 185–196 (RWRKGVQERMGP) the chain is Cytoplasmic. A helical membrane pass occupies residues 197–219 (YTFLETVCIYGYSLFVFIPMVVL). At 220–231 (WLIPVPWLQWLF) the chain is on the lumenal side. A helical membrane pass occupies residues 232–252 (GALALGLSAAGLVFTLWPVVR). Residues 253–256 (EDTR) lie on the Cytoplasmic side of the membrane. The helical transmembrane segment at 257 to 277 (LVATVLLSVVVLLHALLAMGC) threads the bilayer. At 278 to 316 (KLYFFQSLPPENVAPPPQITSLPSNIALSPTLPQSLAPS) the chain is on the lumenal side.

This sequence belongs to the YIP1 family. In terms of assembly, interacts with YIPF6; this interaction may stabilize YIPF2. May also form a ternary complex with YIPF1 and YIPF6.

It localises to the golgi apparatus. It is found in the cis-Golgi network membrane. The protein resides in the trans-Golgi network membrane. Its subcellular location is the late endosome membrane. This is Protein YIPF2 (YIPF2) from Homo sapiens (Human).